We begin with the raw amino-acid sequence, 770 residues long: Capsid protein (770 aa).

2 disordered regions span residues 645-682 and 697-717; these read QRMQ…QKES and WEDS…TQTV. The span at 646 to 656 shows a compositional bias: polar residues; the sequence is RMQQQPTTTDI. The span at 666–681 shows a compositional bias: basic and acidic residues; it reads RDTEVYHSSQEGEQKE. Low complexity predominate over residues 703–717; the sequence is EESGSQSSEEETQTV.

This sequence belongs to the anelloviridae capsid protein family.

The protein localises to the virion. Its function is as follows. Self-assembles to form an icosahedral capsid with a T=1 symmetry, about 30 nm in diameter, and consisting of 60 capsid proteins. The capsid encapsulates the genomic DNA. Capsid protein is involved in attachment and entry into the host cell. This Homo sapiens (Human) protein is Capsid protein.